Here is a 521-residue protein sequence, read N- to C-terminus: MMLMMLPFIGSVSVSESLVAMTTMCLVYLILKFFQTEIPEGLLRLPGPKPLPIIGNVLGLGSKPYLSLTDMSKRYGHVFQIQIGMRPVVVLSGSETVRQALIKQGDDFAGRPDLYSFRFINAGKSLAFSTDQAGVWRARRKLAYSALRSFSNLEGTTPEYSCVLEEHICKEGEYLIKQLNTVMKADGSFDPFRHIVVSVANVICGMCFGRRYDHDDQELVGLVTLSDEFGRVVGSGNPADFIPILQYLPSAAMKNFLRINSRFTEFVQKIVTEHYTTFDKDNIRDITDSLIDHCEDRKLDENSNVQMSDEKIVGIVNDLFGAGFDTVSTALSWSVMYLVAHPEIQERLYQEIEDKVGLDRMPLLSDKPNLPFLEAFILEILRHSSFLPFTIPHCTTKDTSLNGYFIPKDTCVFINQWQINHDPELWKDPSSFNPDRFLSADGSEVNKLDGEKVMAFGMGKRRCIGEVIARNEVYLFLAIIIQKLHFLPIPGEKLDMTPEYGLTMKHKRCHLKATMRARNEH.

Phenylalanine 229 is a binding site for substrate. Cysteine 463 contributes to the heme binding site.

This sequence belongs to the cytochrome P450 family. The cofactor is heme.

It is found in the endoplasmic reticulum membrane. The protein resides in the microsome membrane. The catalysed reaction is an organic molecule + reduced [NADPH--hemoprotein reductase] + O2 = an alcohol + oxidized [NADPH--hemoprotein reductase] + H2O + H(+). Cytochromes P450 are a group of heme-thiolate monooxygenases. They oxidize a variety of structurally unrelated compounds, including steroids, fatty acids, and xenobiotics. This chain is Cytochrome P450 1A1 (cyp1a1), found in Platichthys flesus (European flounder).